The following is a 215-amino-acid chain: uncharacterized protein (215 aa).

2 disordered regions span residues 1–144 (MPKG…PYLR) and 156–215 (IQGH…GAPA). 4 stretches are compositionally biased toward low complexity: residues 16 to 29 (ASTP…ASPT), 49 to 58 (SSSWPKSPIK), 85 to 96 (SGSSSPGPSSSR), and 104 to 127 (STAA…RAAP).

This is an uncharacterized protein from Homo sapiens (Human).